The primary structure comprises 160 residues: General odorant-binding protein 2 (160 aa).

A signal peptide spans 1–19 (MGYKLLLMYIAIVIDSVIG). 3 cysteine pairs are disulfide-bonded: cysteine 38/cysteine 73, cysteine 69/cysteine 127, and cysteine 116/cysteine 136.

Belongs to the PBP/GOBP family. In terms of tissue distribution, antenna.

Its function is as follows. Present in the aqueous fluid surrounding olfactory sensory dendrites and are thought to aid in the capture and transport of hydrophobic odorants into and through this fluid. This chain is General odorant-binding protein 2, found in Antheraea pernyi (Chinese oak silk moth).